Consider the following 88-residue polypeptide: Protein GOLVEN 10 (88 aa).

The signal sequence occupies residues 1 to 22 (MSSIHVASMILLLFLFLHHSDS). The propeptide occupies 23-75 (RHLDNVHITASRFSLVKDQNVVSSSTSKEPVKVSRFVPGPLKHHHRRPPLLFA). A disordered region spans residues 44–88 (VSSSTSKEPVKVSRFVPGPLKHHHRRPPLLFADYPKPSTRPPRHN). The residue at position 77 (Tyr77) is a Sulfotyrosine. At Pro85 the chain carries Hydroxyproline.

This sequence belongs to the RGF family. Binds to LRR receptor-like serine/threonine-protein kinases RGI1, RGI2 and RGI3 to trigger their dimerization with SERK proteins and subsequent signaling. In terms of tissue distribution, expressed in roots, shoots, leaves and flowers.

The protein resides in the secreted. It is found in the endoplasmic reticulum. In terms of biological role, signaling peptide (root growth factor) that maintains the postembryonic root stem cell niche. Regulates the pattern of root growth and lateral root development by modulating the length and the number of cortical cells in the root apical meristem (RAM), and the anticlinal asymmetric cell divisions in lateral root initiation cells. This is Protein GOLVEN 10 from Arabidopsis thaliana (Mouse-ear cress).